The primary structure comprises 1035 residues: Kinesin-like protein KIN-4A (1035 aa).

Positions 11 to 370 constitute a Kinesin motor domain; it reads SVKVAVHIRP…LKYANRARNI (360 aa). Residue 90 to 97 coordinates ATP; the sequence is GQTGSGKT. 3 coiled-coil regions span residues 408 to 436, 504 to 707, and 881 to 911; these read CAEVQALKERIVWLETANEELCRELHEYR, QNSM…RKSS, and KEIVGLLRQSELRRKEAEKELKLREQAIATS. The segment at 704 to 724 is disordered; it reads RKSSPREHSAGTNGFGTNGQT.

This sequence belongs to the TRAFAC class myosin-kinesin ATPase superfamily. Kinesin family. KIN-4 subfamily. In terms of assembly, homodimer. As to expression, expressed in stems and flowers. Detected in cells undergoing secondary wall deposition including developing interfascicular fibers and xylem cells, but also in dividing cells and expanding/elongating parenchyma cells.

The protein resides in the cytoplasm. It is found in the cytoskeleton. Kinesin-like motor protein involved in the control of the oriented deposition of cellulose microfibrils. Its motor activity is directed toward the microtubule's plus end. It possesses the potential to drive long-distance transport of cargo along cortical microtubules. Regulates cell wall mechanics during cell elongation, by the regulation of primary and secondary walls deposition. Contributes to cortical microtubule-mediated trafficking of cell wall components. The sequence is that of Kinesin-like protein KIN-4A from Arabidopsis thaliana (Mouse-ear cress).